Consider the following 418-residue polypeptide: Glutamate dehydrogenase (418 aa).

Residue Lys105 is part of the active site. 217-223 serves as a coordination point for NAD(+); it reads GYGNVGY.

The protein belongs to the Glu/Leu/Phe/Val dehydrogenases family. As to quaternary structure, homohexamer.

It is found in the cytoplasm. The catalysed reaction is L-glutamate + NAD(+) + H2O = 2-oxoglutarate + NH4(+) + NADH + H(+). It catalyses the reaction L-glutamate + NADP(+) + H2O = 2-oxoglutarate + NH4(+) + NADPH + H(+). This Aeropyrum pernix (strain ATCC 700893 / DSM 11879 / JCM 9820 / NBRC 100138 / K1) protein is Glutamate dehydrogenase (gdhA).